Reading from the N-terminus, the 83-residue chain is MSVKIRLKRMGAKKKPFYRIVVADSRCPRDGKFIEEIGYYNPLVEEKTVKVDSEKVQQWIKNGAKPTDTVDRLFKNNGVYEAK.

The protein belongs to the bacterial ribosomal protein bS16 family.

The protein is Small ribosomal subunit protein bS16 of Finegoldia magna (strain ATCC 29328 / DSM 20472 / WAL 2508) (Peptostreptococcus magnus).